The chain runs to 268 residues: Protein MGF 300-1L (268 aa).

The Cytoplasmic segment spans residues 1–175; that stretch reads MVSLTTCCLK…QTFKIFYAKN (175 aa). The chain crosses the membrane as a helical span at residues 176-193; sequence YSLSTLYCIFLAIYYKRY. Over 194-268 the chain is Extracellular; the sequence is TALRKMVKIY…MYAFSQNNFW (75 aa).

This sequence belongs to the asfivirus MGF 300 family.

It localises to the host membrane. Functionally, plays a role in virus cell tropism, and may be required for efficient virus replication in macrophages. The protein is Protein MGF 300-1L of African swine fever virus (isolate Tick/South Africa/Pretoriuskop Pr4/1996) (ASFV).